Consider the following 421-residue polypeptide: Tyrosine--tRNA ligase 1 (421 aa).

Residue Y35 coordinates L-tyrosine. A 'HIGH' region motif is present at residues 40–49 (PTADSLHIGH). 2 residues coordinate L-tyrosine: Y170 and Q174. The 'KMSKS' region signature appears at 231–235 (KFGKT). Position 234 (K234) interacts with ATP. One can recognise an S4 RNA-binding domain in the interval 354 to 420 (LPLVEILVQS…GKKKYFLLTY (67 aa)).

Belongs to the class-I aminoacyl-tRNA synthetase family. TyrS type 1 subfamily. Homodimer.

The protein localises to the cytoplasm. It carries out the reaction tRNA(Tyr) + L-tyrosine + ATP = L-tyrosyl-tRNA(Tyr) + AMP + diphosphate + H(+). Catalyzes the attachment of tyrosine to tRNA(Tyr) in a two-step reaction: tyrosine is first activated by ATP to form Tyr-AMP and then transferred to the acceptor end of tRNA(Tyr). The chain is Tyrosine--tRNA ligase 1 from Bacillus licheniformis (strain ATCC 14580 / DSM 13 / JCM 2505 / CCUG 7422 / NBRC 12200 / NCIMB 9375 / NCTC 10341 / NRRL NRS-1264 / Gibson 46).